Here is a 250-residue protein sequence, read N- to C-terminus: Pyridoxine 5'-phosphate synthase (250 aa).

Positions 8 and 19 each coordinate 3-amino-2-oxopropyl phosphate. His44 (proton acceptor) is an active-site residue. Arg46 and His51 together coordinate 1-deoxy-D-xylulose 5-phosphate. Glu76 acts as the Proton acceptor in catalysis. Residue Thr106 participates in 1-deoxy-D-xylulose 5-phosphate binding. His200 serves as the catalytic Proton donor. 3-amino-2-oxopropyl phosphate is bound by residues Asp201 and 223–224; that span reads GH.

The protein belongs to the PNP synthase family. In terms of assembly, homooctamer; tetramer of dimers.

Its subcellular location is the cytoplasm. It catalyses the reaction 3-amino-2-oxopropyl phosphate + 1-deoxy-D-xylulose 5-phosphate = pyridoxine 5'-phosphate + phosphate + 2 H2O + H(+). It functions in the pathway cofactor biosynthesis; pyridoxine 5'-phosphate biosynthesis; pyridoxine 5'-phosphate from D-erythrose 4-phosphate: step 5/5. Functionally, catalyzes the complicated ring closure reaction between the two acyclic compounds 1-deoxy-D-xylulose-5-phosphate (DXP) and 3-amino-2-oxopropyl phosphate (1-amino-acetone-3-phosphate or AAP) to form pyridoxine 5'-phosphate (PNP) and inorganic phosphate. This Allorhizobium ampelinum (strain ATCC BAA-846 / DSM 112012 / S4) (Agrobacterium vitis (strain S4)) protein is Pyridoxine 5'-phosphate synthase.